Consider the following 96-residue polypeptide: Class I hydrophobin 2 (96 aa).

An N-terminal signal peptide occupies residues 1–15 (MFKALIVALAAVAAA). 4 disulfide bridges follow: cysteine 28-cysteine 77, cysteine 34-cysteine 71, cysteine 35-cysteine 55, and cysteine 78-cysteine 91.

This sequence belongs to the fungal hydrophobin family.

The protein resides in the secreted. The protein localises to the cell wall. In terms of biological role, aerial growth, conidiation, and dispersal of filamentous fungi in the environment rely upon a capability of their secreting small amphipathic proteins called hydrophobins (HPBs) with low sequence identity. Class I can self-assemble into an outermost layer of rodlet bundles on aerial cell surfaces, conferring cellular hydrophobicity that supports fungal growth, development and dispersal; whereas Class II form highly ordered films at water-air interfaces through intermolecular interactions but contribute nothing to the rodlet structure. Hyd2 plays a neglectable role in hyphal growth and asexual development and does not seem involved in cellular hydrophobicity, conidial adhesion, stress tolerance nor insect pathogenicity. This Metarhizium robertsii (strain ARSEF 23 / ATCC MYA-3075) (Metarhizium anisopliae (strain ARSEF 23)) protein is Class I hydrophobin 2.